The chain runs to 156 residues: Regulatory protein RecX (156 aa).

Belongs to the RecX family.

The protein localises to the cytoplasm. In terms of biological role, modulates RecA activity. This chain is Regulatory protein RecX, found in Pseudomonas putida (strain W619).